Consider the following 136-residue polypeptide: Large ribosomal subunit protein uL16 (136 aa).

It belongs to the universal ribosomal protein uL16 family. Part of the 50S ribosomal subunit.

In terms of biological role, binds 23S rRNA and is also seen to make contacts with the A and possibly P site tRNAs. In Shewanella loihica (strain ATCC BAA-1088 / PV-4), this protein is Large ribosomal subunit protein uL16.